The primary structure comprises 408 residues: Imidazolonepropionase (408 aa).

2 residues coordinate Fe(3+): His73 and His75. Zn(2+) is bound by residues His73 and His75. Residues Arg82, Tyr145, and His178 each contribute to the 4-imidazolone-5-propanoate site. Residue Tyr145 participates in N-formimidoyl-L-glutamate binding. His243 contacts Fe(3+). Residue His243 coordinates Zn(2+). Gln246 contributes to the 4-imidazolone-5-propanoate binding site. Asp318 serves as a coordination point for Fe(3+). Asp318 contacts Zn(2+). Asn320 and Gly322 together coordinate N-formimidoyl-L-glutamate. Ser323 is a 4-imidazolone-5-propanoate binding site.

The protein belongs to the metallo-dependent hydrolases superfamily. HutI family. It depends on Zn(2+) as a cofactor. Fe(3+) serves as cofactor.

It is found in the cytoplasm. It carries out the reaction 4-imidazolone-5-propanoate + H2O = N-formimidoyl-L-glutamate. It functions in the pathway amino-acid degradation; L-histidine degradation into L-glutamate; N-formimidoyl-L-glutamate from L-histidine: step 3/3. Its function is as follows. Catalyzes the hydrolytic cleavage of the carbon-nitrogen bond in imidazolone-5-propanoate to yield N-formimidoyl-L-glutamate. It is the third step in the universal histidine degradation pathway. This chain is Imidazolonepropionase, found in Shewanella oneidensis (strain ATCC 700550 / JCM 31522 / CIP 106686 / LMG 19005 / NCIMB 14063 / MR-1).